The primary structure comprises 98 residues: NADH-ubiquinone oxidoreductase chain 4L (98 aa).

3 helical membrane passes run 2–22 (PSIS…MLMF), 29–49 (SLLC…LIIL), and 61–81 (ILLL…LVMI).

The protein belongs to the complex I subunit 4L family. Core subunit of respiratory chain NADH dehydrogenase (Complex I) which is composed of 45 different subunits.

The protein resides in the mitochondrion inner membrane. The catalysed reaction is a ubiquinone + NADH + 5 H(+)(in) = a ubiquinol + NAD(+) + 4 H(+)(out). Functionally, core subunit of the mitochondrial membrane respiratory chain NADH dehydrogenase (Complex I) which catalyzes electron transfer from NADH through the respiratory chain, using ubiquinone as an electron acceptor. Part of the enzyme membrane arm which is embedded in the lipid bilayer and involved in proton translocation. This is NADH-ubiquinone oxidoreductase chain 4L (MT-ND4L) from Mirza coquereli (Coquerel's giant mouse lemur).